A 291-amino-acid polypeptide reads, in one-letter code: Lys-63-specific deubiquitinase BRCC36-like (291 aa).

One can recognise an MPN domain in the interval 12 to 179 (VYLESDAFLV…YTCFQSVQAS (168 aa)). Residues H122, H124, and D135 each coordinate Zn(2+). The short motif at 122–135 (HSHPHITVWPSHVD) is the JAMM motif element. Residues 259–286 (LQWLEDRLEQNQQRLQELEQEKEDLMEE) adopt a coiled-coil conformation.

Belongs to the peptidase M67A family. BRCC36 subfamily.

Functionally, metalloprotease that specifically cleaves 'Lys-63'-linked polyubiquitin chains. The chain is Lys-63-specific deubiquitinase BRCC36-like from Mus musculus (Mouse).